The following is a 146-amino-acid chain: Endothelial differentiation-related factor 1 homolog (146 aa).

Residues 13-53 form a disordered region; that stretch reads RKKGSAAQSKSKQAVTAAQRKGEAVETSKKWAAGQNKQHVV. Residues 17–31 are compositionally biased toward low complexity; sequence SAAQSKSKQAVTAAQ. The segment covering 32–41 has biased composition (basic and acidic residues); that stretch reads RKGEAVETSK. One can recognise an HTH cro/C1-type domain in the interval 80–134; the sequence is IQQGRQNKGLTQKDLATKINEKPQIIAEYECGKAIPNNQVMGKIERAIGLKLRGK. A DNA-binding region (H-T-H motif) is located at residues 91-110; it reads QKDLATKINEKPQIIAEYEC.

It is found in the nucleus. In terms of biological role, probable transcriptional coactivator. The protein is Endothelial differentiation-related factor 1 homolog (edf1) of Danio rerio (Zebrafish).